The following is a 218-amino-acid chain: DNA-directed RNA polymerase III subunit RPC7-like (218 aa).

Residues L133–Y218 are disordered. Residues K139–E160 are compositionally biased toward basic and acidic residues. Acidic residues-rich tracts occupy residues V161–D193 and N201–Y218.

This sequence belongs to the eukaryotic RPC7 RNA polymerase subunit family. In terms of assembly, component of the RNA polymerase III (Pol III) complex consisting of 17 subunits. Pol III exists as two alternative complexes defined by the mutually exclusive incorporation of subunit POLR3G/RPC7alpha or POLR3GL/RPC7beta. Found in a trimeric complex with POLR3C/RPC3 and POLR3F/RPC6. Directly interacts with POLR3C. As to expression, widely expressed. Expressed in CD4-positive T cells.

It is found in the nucleus. Functionally, DNA-dependent RNA polymerase catalyzes the transcription of DNA into RNA using the four ribonucleoside triphosphates as substrates. Specific peripheric component of RNA polymerase III which synthesizes small RNAs, such as 5S rRNA and tRNAs. The protein is DNA-directed RNA polymerase III subunit RPC7-like of Homo sapiens (Human).